A 297-amino-acid polypeptide reads, in one-letter code: tRNA uridine(34) hydroxylase (297 aa).

One can recognise a Rhodanese domain in the interval 137 to 232 (RGDDVVFFDG…YGEKYGDKGL (96 aa)). The active-site Cysteine persulfide intermediate is the cysteine 192.

The protein belongs to the TrhO family.

It catalyses the reaction uridine(34) in tRNA + AH2 + O2 = 5-hydroxyuridine(34) in tRNA + A + H2O. Its function is as follows. Catalyzes oxygen-dependent 5-hydroxyuridine (ho5U) modification at position 34 in tRNAs. The protein is tRNA uridine(34) hydroxylase of Corynebacterium urealyticum (strain ATCC 43042 / DSM 7109).